The sequence spans 637 residues: Early transcription factor 70 kDa subunit (637 aa).

Positions arginine 32–glutamate 185 constitute a Helicase ATP-binding domain. An ATP-binding site is contributed by histidine 45 to threonine 52. Positions aspartate 135–histidine 138 match the DEXH box motif. The Helicase C-terminal domain occupies lysine 327 to leucine 507.

Belongs to the helicase family. VETF subfamily. In terms of assembly, heterodimer of a 70 kDa and a 82 kDa subunit. Part of the early transcription complex composed of ETF, RAP94/OPG109, and the DNA-directed RNA polymerase.

The protein localises to the virion. Functionally, acts with RNA polymerase to initiate transcription from early gene promoters. Is recruited by the RPO-associated protein of 94 kDa RAP94/OPG109 to form the early transcription complex, which also contains the core RNA polymerase. ETF heterodimer binds to early gene promoters. The polypeptide is Early transcription factor 70 kDa subunit (OPG118) (Vaccinia virus (strain Ankara) (VACV)).